Consider the following 184-residue polypeptide: Probable N-acetyltransferase san (184 aa).

An N-acetyltransferase domain is found at 6-155 (IELGDVTPHN…DAHVLQKTLR (150 aa)). Tyr-31 lines the substrate pocket. Lys-47 is subject to N6-acetyllysine; by autocatalysis. Tyr-73 is a catalytic residue. Met-75 is a substrate binding site. Acetyl-CoA is bound at residue 77 to 90 (LGCLSPYRRLGIGT). Residue His-112 is part of the active site. 117 to 126 (NNGAIEFYKK) contributes to the CoA binding site. The segment at 138–141 (YYKR) is substrate. Low complexity predominate over residues 157-174 (TAPNSNSTATSTTANSNS). Residues 157–176 (TAPNSNSTATSTTANSNSRS) form a disordered region.

Belongs to the acetyltransferase family. As to quaternary structure, component of an acetyltransferase complex, at least composed of san, Ard1 and Nat1. Autoacetylated.

Its subcellular location is the cytoplasm. The catalysed reaction is N-terminal L-methionyl-L-alanyl-[protein] + acetyl-CoA = N-terminal N(alpha)-acetyl-L-methionyl-L-alanyl-[protein] + CoA + H(+). It carries out the reaction N-terminal L-methionyl-L-seryl-[protein] + acetyl-CoA = N-terminal N(alpha)-acetyl-L-methionyl-L-seryl-[protein] + CoA + H(+). It catalyses the reaction N-terminal L-methionyl-L-valyl-[protein] + acetyl-CoA = N-terminal N(alpha)-acetyl-L-methionyl-L-valyl-[protein] + CoA + H(+). The enzyme catalyses N-terminal L-methionyl-L-threonyl-[protein] + acetyl-CoA = N-terminal N(alpha)-acetyl-L-methionyl-L-threonyl-[protein] + CoA + H(+). The catalysed reaction is N-terminal L-methionyl-L-lysyl-[protein] + acetyl-CoA = N-terminal N(alpha)-acetyl-L-methionyl-L-lysyl-[protein] + CoA + H(+). It carries out the reaction N-terminal L-methionyl-L-leucyl-[protein] + acetyl-CoA = N-terminal N(alpha)-acetyl-L-methionyl-L-leucyl-[protein] + CoA + H(+). It catalyses the reaction N-terminal L-methionyl-L-phenylalanyl-[protein] + acetyl-CoA = N-terminal N(alpha)-acetyl-L-methionyl-L-phenylalanyl-[protein] + CoA + H(+). The enzyme catalyses N-terminal L-methionyl-L-tyrosyl-[protein] + acetyl-CoA = N-terminal N(alpha)-acetyl-L-methionyl-L-tyrosyl-[protein] + CoA + H(+). Its function is as follows. N-alpha-acetyltransferase that acetylates the N-terminus of proteins that retain their initiating methionine. Has a broad substrate specificity: able to acetylate the initiator methionine of most peptides. Also displays N-epsilon-acetyltransferase activity by mediating acetylation of the side chain of specific lysines on proteins. Autoacetylates. Required for the establishment of sister chromatid cohesion and couple the processes of cohesion and DNA replication to ensure that only sister chromatids become paired together. Required for the interaction between Scc1/vtd and SMC3, possibly by mediating N-terminal acetylation of Scc1/vtd. Functionally, (Microbial infection) Required for optimal replication of E.chaffeensis in the immune tissues, hemocytes, and fat body. The polypeptide is Probable N-acetyltransferase san (san) (Drosophila melanogaster (Fruit fly)).